Here is a 529-residue protein sequence, read N- to C-terminus: Calcium-dependent protein kinase 3 (529 aa).

The interval Met1–Glu73 is disordered. Residue Gly2 is the site of N-myristoyl glycine attachment. Residues Ser39–Gly53 are compositionally biased toward gly residues. In terms of domain architecture, Protein kinase spans Tyr78 to Ile336. ATP-binding positions include Leu84–Thr92 and Lys107. Asp202 functions as the Proton acceptor in the catalytic mechanism. A Phosphoserine modification is found at Ser242. Residues Ala342–Ile372 are autoinhibitory domain. EF-hand domains lie at Glu379–Lys414, Ile415–Ile450, Glu451–Met485, and Gly486–Glu521. Residues Asp392, Asp394, Asn396, Glu403, Asp428, Asp430, Asp432, Ser434, Glu439, Asp464, Asp466, Ser468, Tyr470, Glu475, Asp499, Asp501, Asp503, Lys505, and Glu510 each contribute to the Ca(2+) site.

Belongs to the protein kinase superfamily. Ser/Thr protein kinase family. CDPK subfamily. As to quaternary structure, interacts with GHR1. As to expression, expressed in both guard cells and mesophyll cells.

It localises to the cytoplasm. Its subcellular location is the nucleus. It catalyses the reaction L-seryl-[protein] + ATP = O-phospho-L-seryl-[protein] + ADP + H(+). The catalysed reaction is L-threonyl-[protein] + ATP = O-phospho-L-threonyl-[protein] + ADP + H(+). Its activity is regulated as follows. Activated by calcium. Autophosphorylation may play an important role in the regulation of the kinase activity. May play a role in signal transduction pathways that involve calcium as a second messenger. Functions in abscisic acid (ABA) regulation of guard cell S-type anion- and Ca(2+)-permeable channels and stomatal closure. The sequence is that of Calcium-dependent protein kinase 3 from Arabidopsis thaliana (Mouse-ear cress).